We begin with the raw amino-acid sequence, 156 residues long: Small ribosomal subunit protein uS7 (156 aa).

Belongs to the universal ribosomal protein uS7 family. As to quaternary structure, part of the 30S ribosomal subunit. Contacts proteins S9 and S11.

Functionally, one of the primary rRNA binding proteins, it binds directly to 16S rRNA where it nucleates assembly of the head domain of the 30S subunit. Is located at the subunit interface close to the decoding center, probably blocks exit of the E-site tRNA. In Pseudomonas aeruginosa (strain LESB58), this protein is Small ribosomal subunit protein uS7.